A 358-amino-acid chain; its full sequence is 3-isopropylmalate dehydrogenase (358 aa).

77-90 (GEKWDSLPRELRPE) contacts NAD(+). Positions 97, 107, 135, and 220 each coordinate substrate. Asp220, Asp244, and Asp248 together coordinate Mg(2+). 277 to 289 (GSAPDIAGQGIAN) is an NAD(+) binding site.

Belongs to the isocitrate and isopropylmalate dehydrogenases family. LeuB type 1 subfamily. Homodimer. The cofactor is Mg(2+). Mn(2+) serves as cofactor.

It is found in the cytoplasm. The catalysed reaction is (2R,3S)-3-isopropylmalate + NAD(+) = 4-methyl-2-oxopentanoate + CO2 + NADH. It functions in the pathway amino-acid biosynthesis; L-leucine biosynthesis; L-leucine from 3-methyl-2-oxobutanoate: step 3/4. Its function is as follows. Catalyzes the oxidation of 3-carboxy-2-hydroxy-4-methylpentanoate (3-isopropylmalate) to 3-carboxy-4-methyl-2-oxopentanoate. The product decarboxylates to 4-methyl-2 oxopentanoate. The sequence is that of 3-isopropylmalate dehydrogenase from Wolinella succinogenes (strain ATCC 29543 / DSM 1740 / CCUG 13145 / JCM 31913 / LMG 7466 / NCTC 11488 / FDC 602W) (Vibrio succinogenes).